A 146-amino-acid polypeptide reads, in one-letter code: VQWSSSERSVISGLWAKVNAAEVGPQALARLLVLYPWTQRYFGKFGDLSSNAALMGNANVAKHGKDLLLADLKAVKNMDNVKALYAKXXXXXXXELNVDPDNFTLLGDCLTIVLAMKFGADFTPVDQAVWQKFVAVVVSGLSKQYF.

The 145-residue stretch at 2 to 146 (QWSSSERSVI…VVSGLSKQYF (145 aa)) folds into the Globin domain. His-63 provides a ligand contact to heme b.

In terms of assembly, heterotetramer of two alpha and two beta chains. As to expression, red blood cells.

Functionally, involved in oxygen transport from the gills to various peripheral tissues. The sequence is that of Hemoglobin cathodic subunit beta from Ophisurus serpens (Serpent eel).